The chain runs to 89 residues: Putative defensin-like protein 230 (89 aa).

The first 26 residues, 1 to 26 (MRSVIWFIVSYTLMLLVLRGGKEVEA), serve as a signal peptide directing secretion. Disulfide bonds link Cys30–Cys84, Cys40–Cys65, Cys48–Cys78, and Cys63–Cys80.

This sequence belongs to the DEFL family.

The protein localises to the secreted. In Arabidopsis thaliana (Mouse-ear cress), this protein is Putative defensin-like protein 230 (SCRL24).